A 285-amino-acid polypeptide reads, in one-letter code: NADPH-dependent 7-cyano-7-deazaguanine reductase (285 aa).

91–93 (IES) contributes to the substrate binding site. Residue 93 to 94 (SK) coordinates NADPH. Cysteine 191 acts as the Thioimide intermediate in catalysis. Aspartate 198 serves as the catalytic Proton donor. 230–231 (HE) lines the substrate pocket. Position 259-260 (259-260 (RG)) interacts with NADPH.

Belongs to the GTP cyclohydrolase I family. QueF type 2 subfamily. As to quaternary structure, homodimer.

Its subcellular location is the cytoplasm. It carries out the reaction 7-aminomethyl-7-carbaguanine + 2 NADP(+) = 7-cyano-7-deazaguanine + 2 NADPH + 3 H(+). It functions in the pathway tRNA modification; tRNA-queuosine biosynthesis. Functionally, catalyzes the NADPH-dependent reduction of 7-cyano-7-deazaguanine (preQ0) to 7-aminomethyl-7-deazaguanine (preQ1). This is NADPH-dependent 7-cyano-7-deazaguanine reductase from Legionella pneumophila (strain Paris).